The following is a 376-amino-acid chain: D-alanine--D-alanine ligase (376 aa).

One can recognise an ATP-grasp domain in the interval 153-366 (KLLLAGQGLP…YPELVHRLIQ (214 aa)). 185-240 (VEALGYPVFVKPARAGSSIGITRVTSREGLAAAVAEAVSHDPKVVVEAALVGREIE) provides a ligand contact to ATP. Asp317, Glu333, and Asn335 together coordinate Mg(2+).

Belongs to the D-alanine--D-alanine ligase family. Mg(2+) is required as a cofactor. It depends on Mn(2+) as a cofactor.

It is found in the cytoplasm. It catalyses the reaction 2 D-alanine + ATP = D-alanyl-D-alanine + ADP + phosphate + H(+). It functions in the pathway cell wall biogenesis; peptidoglycan biosynthesis. In terms of biological role, cell wall formation. The protein is D-alanine--D-alanine ligase of Kineococcus radiotolerans (strain ATCC BAA-149 / DSM 14245 / SRS30216).